Consider the following 343-residue polypeptide: Homeobox-leucine zipper protein HOX16 (343 aa).

The segment at residues 74-133 is a DNA-binding region (homeobox); it reads LPEKKRRLTPEQVHLLERSFEEENKLEPERKTELARKLGLQPRQVAVWFQNRRARWKTKQ. The leucine-zipper stretch occupies residues 132 to 176; that stretch reads KQLERDFDRLKASFDALRADHDALLQDNHRLHSQVMSLTEKLQEK. The segment at 218–239 is disordered; that stretch reads FEEQQEQQVKAEDRLSTGSGGS.

The protein belongs to the HD-ZIP homeobox family. Class I subfamily. As to expression, expressed in seedlings, stems, leaf sheaths and blades and panicles.

The protein resides in the nucleus. Functionally, probable transcription factor. The chain is Homeobox-leucine zipper protein HOX16 (HOX16) from Oryza sativa subsp. japonica (Rice).